The primary structure comprises 437 residues: Carbonic anhydrase 9 (437 aa).

An N-terminal signal peptide occupies residues 1 to 31 (MASLGPSPWAPLSTPAPTAQLLLFLLLQVSA). Residues 32–95 (QPQGLSGMQG…RMEESLGLED (64 aa)) are proteoglycan-like (PG). Topologically, residues 32-390 (QPQGLSGMQG…HVNSCFTAGD (359 aa)) are extracellular. Positions 34–118 (QGLSGMQGEP…HGDEKGGGHS (85 aa)) are disordered. Acidic residues predominate over residues 50 to 79 (SGEDELGVDVLPSEEDAPEEADPPDGEDPP). A catalytic region spans residues 96–390 (LSTPEAPEHS…HVNSCFTAGD (295 aa)). T98 carries an O-linked (GlcNAc...) threonine glycan. Positions 118-369 (SHWSYGGTLL…LNGRTIEASF (252 aa)) constitute an Alpha-carbonic anhydrase domain. The cysteines at positions 135 and 315 are disulfide-linked. Catalysis depends on H179, which acts as the Proton donor/acceptor. 3 residues coordinate Zn(2+): H205, H207, and H230. 311–312 (TT) lines the substrate pocket. The N-linked (GlcNAc...) asparagine glycan is linked to N325. The helical transmembrane segment at 391–411 (ILALVFGLLFAVTSIAFLLQL) threads the bilayer. Over 412-437 (RRQHRHRSGTKDRVSYSPAEMTETGA) the chain is Cytoplasmic. Y427 is subject to Phosphotyrosine.

It belongs to the alpha-carbonic anhydrase family. Forms oligomers linked by disulfide bonds. It depends on Zn(2+) as a cofactor. Asn-325 bears high-mannose type glycan structures.

It localises to the nucleus. The protein localises to the nucleolus. The protein resides in the cell membrane. It is found in the cell projection. Its subcellular location is the microvillus membrane. The enzyme catalyses hydrogencarbonate + H(+) = CO2 + H2O. Its activity is regulated as follows. Inhibited by acetazolamide. In terms of biological role, catalyzes the interconversion between carbon dioxide and water and the dissociated ions of carbonic acid (i.e. bicarbonate and hydrogen ions). The polypeptide is Carbonic anhydrase 9 (Ca9) (Mus musculus (Mouse)).